A 720-amino-acid polypeptide reads, in one-letter code: MNNHVSSTPSTMKLKQTINPILLYFIHFIISLYTILTYIPFYFLCESKQEKPNQIKAKPVSSKPDSAYRSINSVDGLASVLYPGCDTLDKVFMYAKNKFKNKRLLGTREILNEEDEIQPNGKIFKKVILGHYNWLSYEDVFIRALDFGNGLQMLGQKPKANIAIFCETRAEWMIAAQACFMYNFQLVTLYATLGGPAIVHGLNETEVTNIITSKELLQTKLKDIVSLVPRLRHIITVDGKPPTWSEFPKGVIVHTMAAVQALGVKANVEKKAHSKPLPSDIAVIMYTSGSTGIPKGVMISHSNIIASITGMARRIPRLGEEDVYIGYLPLAHVLELSAELVCLSHGCRIGYSSPQTLADQSSKIKKGSKGDTSVLKPTLMAAVPEIMDRIYKNVMNKVNEMSAFQRNLFILAYNYKMEQISKGCSTPLCDRFVFRNVRRLLGGNIRLLLCGGAPLSATTQRFMNICFCCPVGQGYGLTESTGAGTITEVWDYNTGRVGAPLVCCEIKLKNWEEGGYFNTDKPHPRGEILIGGQNVTMGYYKNEAKTKTDFFEDENGQRWLCTGDIGEFDPDGCLKIIDRKKDLVKLQAGEYVSLGKVEAALKNLPLIDNICAYANSYHSYVIGFVVPNQKELTELARTKGFKGTWEELCNSSEMENEVLKVLSEAAISASLEKFEIPLKIRLSPDPWTPETGLVTDAFKLKRKELKTHYQADIERMYGRK.

The chain crosses the membrane as a helical; Signal-anchor for type III membrane protein span at residues 21–41; the sequence is ILLYFIHFIISLYTILTYIPF. Residues 42 to 720 are Cytoplasmic-facing; that stretch reads YFLCESKQEK…ADIERMYGRK (679 aa). Ser-683 carries the phosphoserine modification.

The protein belongs to the ATP-dependent AMP-binding enzyme family. Mg(2+) serves as cofactor.

It localises to the mitochondrion outer membrane. It is found in the peroxisome membrane. The protein localises to the microsome membrane. Its subcellular location is the endoplasmic reticulum membrane. It catalyses the reaction a long-chain fatty acid + ATP + CoA = a long-chain fatty acyl-CoA + AMP + diphosphate. It carries out the reaction (E)-hexadec-2-enoate + ATP + CoA = (2E)-hexadecenoyl-CoA + AMP + diphosphate. The catalysed reaction is (5Z,8Z,11Z,14Z)-eicosatetraenoate + ATP + CoA = (5Z,8Z,11Z,14Z)-eicosatetraenoyl-CoA + AMP + diphosphate. The enzyme catalyses 15-hydroxy-(5Z,8Z,11Z,13E)-eicosatetraenoate + ATP + CoA = 15-hydroxy-(5Z,8Z,11Z,13E)-eicosatetraenoyl-CoA + AMP + diphosphate. It catalyses the reaction 12-hydroxy-(5Z,8Z,10E,14Z)-eicosatetraenoate + ATP + CoA = 12-hydroxy-(5Z,8Z,10E,14Z)-eicosatetraenoyl-CoA + AMP + diphosphate. It carries out the reaction 5-hydroxy-(6E,8Z,11Z,14Z)-eicosatetraenoate + ATP + CoA = 5-hydroxy-(6E,8Z,11Z,14Z)-eicosatetraenoyl-CoA + AMP + diphosphate. The catalysed reaction is 14,15-epoxy-(5Z,8Z,11Z)-eicosatrienoate + ATP + CoA = 14,15-epoxy-(5Z,8Z,11Z)-eicosatrienoyl-CoA + AMP + diphosphate. The enzyme catalyses 11,12-epoxy-(5Z,8Z,14Z)-eicosatrienoate + ATP + CoA = 11,12-epoxy-(5Z,8Z,14Z)-eicosatrienoyl-CoA + AMP + diphosphate. It catalyses the reaction a medium-chain fatty acid + ATP + CoA = a medium-chain fatty acyl-CoA + AMP + diphosphate. It carries out the reaction hexadecanoate + ATP + CoA = hexadecanoyl-CoA + AMP + diphosphate. The catalysed reaction is tetradecanoate + ATP + CoA = tetradecanoyl-CoA + AMP + diphosphate. The enzyme catalyses dodecanoate + ATP + CoA = dodecanoyl-CoA + AMP + diphosphate. It catalyses the reaction octadecanoate + ATP + CoA = octadecanoyl-CoA + AMP + diphosphate. It carries out the reaction eicosanoate + ATP + CoA = eicosanoyl-CoA + AMP + diphosphate. The catalysed reaction is (9Z)-octadecenoate + ATP + CoA = (9Z)-octadecenoyl-CoA + AMP + diphosphate. The enzyme catalyses (9Z)-hexadecenoate + ATP + CoA = (9Z)-hexadecenoyl-CoA + AMP + diphosphate. It catalyses the reaction (9Z,12Z)-octadecadienoate + ATP + CoA = (9Z,12Z)-octadecadienoyl-CoA + AMP + diphosphate. It carries out the reaction (9Z,12Z,15Z)-octadecatrienoate + ATP + CoA = (9Z,12Z,15Z)-octadecatrienoyl-CoA + AMP + diphosphate. The catalysed reaction is (4Z,7Z,10Z,13Z,16Z,19Z)-docosahexaenoate + ATP + CoA = (4Z,7Z,10Z,13Z,16Z,19Z)-docosahexaenoyl-CoA + AMP + diphosphate. The enzyme catalyses (5Z,8Z,11Z,14Z,17Z)-eicosapentaenoate + ATP + CoA = (5Z,8Z,11Z,14Z,17Z)-eicosapentaenoyl-CoA + AMP + diphosphate. It catalyses the reaction a fatty acid + ATP + CoA = a fatty acyl-CoA + AMP + diphosphate. Functionally, acyl-CoA synthetases (ACSL) activates long-chain fatty acids for both synthesis of cellular lipids, and degradation via beta-oxidation. ACSL3 is required for the incorporation of fatty acids into phosphatidylcholine, the major phospholipid located on the surface of VLDL (very low density lipoproteins). Has mainly an anabolic role in energy metabolism. Mediates hepatic lipogenesis. Preferentially uses myristate, laurate, arachidonate and eicosapentaenoate as substrates. Both isoforms exhibit the same level of activity. The polypeptide is Fatty acid CoA ligase Acsl3 (Mus musculus (Mouse)).